Here is a 75-residue protein sequence, read N- to C-terminus: Guanine nucleotide-binding protein G(I)/G(S)/G(O) subunit gamma-4 (75 aa).

Cys-72 is subject to Cysteine methyl ester. Cys-72 carries S-geranylgeranyl cysteine lipidation. A propeptide spans 73-75 (TIL) (removed in mature form).

The protein belongs to the G protein gamma family. As to quaternary structure, g proteins are composed of 3 units, alpha, beta and gamma. Interacts with beta-1 and beta-2, but not with beta-3. Interacts with KCNK1. Interacts (via C-terminus) with KCNK2/TREK-1 (via N-terminus); this interaction confers ion selectivity to Cl(-) and L-glutamate. In terms of tissue distribution, brain, kidney, pancreas, skeletal muscle and faintly in cardiac muscle.

It localises to the cell membrane. Its function is as follows. Guanine nucleotide-binding proteins (G proteins) are involved as a modulator or transducer in various transmembrane signaling systems. The beta and gamma chains are required for the GTPase activity, for replacement of GDP by GTP, and for G protein-effector interaction. This chain is Guanine nucleotide-binding protein G(I)/G(S)/G(O) subunit gamma-4 (GNG4), found in Homo sapiens (Human).